We begin with the raw amino-acid sequence, 221 residues long: Small ribosomal subunit protein uS3 (221 aa).

The region spanning 39-107 (IREYIKRKLY…QVHVNIVEVK (69 aa)) is the KH type-2 domain.

Belongs to the universal ribosomal protein uS3 family. As to quaternary structure, part of the 30S ribosomal subunit. Forms a tight complex with proteins S10 and S14.

In terms of biological role, binds the lower part of the 30S subunit head. Binds mRNA in the 70S ribosome, positioning it for translation. The polypeptide is Small ribosomal subunit protein uS3 (Desulforamulus reducens (strain ATCC BAA-1160 / DSM 100696 / MI-1) (Desulfotomaculum reducens)).